We begin with the raw amino-acid sequence, 691 residues long: MSVPSSVIENHLVPKEIPVYRLNARESFNLLTEKEQLYAHHISVACWWGSKICLGQTSIESGPIFNLFQNLFSIQNLKSTVVPNIVSEEEYSDLLSYAATFYGNMGNYLSFGDSKFIPRISKEKLQLIINKVNDNKVNEYWGKCSELMYSLDKQVRELGIDGNGISTYYSPNITKVEIEKVQKFMDSKSISPYNTRLFKVSENNYNLLIASASTSTPTVSHQFDGYTINIVYGDWNKNLTKVVDNLKLALPYAANENQTNMLKKYIDSFYSGSIDDHKDSQRWWIKDISPAVETNIGFIESYRDPYGVRGEWEGFVSMVNKEMSLKFGKLTDNATTFLSKLPWDKSFEKEKFNKPDFTSLEVLTFATTGIPAGINLSNYDDIRQTEGFKNVSLGNVIAARKDEYVTFIQESDQKLFNELSTEAFELQVGIHELYGHGSGKLFTTDANGNVNFKVGEVINPLTNKPIDPKTEVYKFGETYDSVFKSLGSPMEECRAECCGIYLSPDEKILELFGFTDPKKAEDVYYVNWLIMARAGVCALEFYSPPSEGAPGKWRQAHMQARYCILTTFLRSGIVTLDKTADDVIVKLDKSKIRGIGVKAVGDFLNRLMVYKATANIDASIKLFDEYTHVNEEFLAIRDIVLAKKKPRKVFVQAHTYLNSNGKVCLQDFDDSTQGMIDSMITRFGKDDSDML.

His431 is a Zn(2+) binding site. The active site involves Glu432. Zn(2+)-binding residues include His436 and Glu492.

Belongs to the peptidase M49 family. It depends on Zn(2+) as a cofactor.

The protein localises to the cytoplasm. The enzyme catalyses Release of an N-terminal dipeptide from a peptide comprising four or more residues, with broad specificity. Also acts on dipeptidyl 2-naphthylamides.. This chain is Dipeptidyl peptidase 3 (dpp3-1), found in Dictyostelium discoideum (Social amoeba).